A 131-amino-acid chain; its full sequence is Small ribosomal subunit protein uS8 (131 aa).

Belongs to the universal ribosomal protein uS8 family. In terms of assembly, part of the 30S ribosomal subunit. Contacts proteins S5 and S12.

Functionally, one of the primary rRNA binding proteins, it binds directly to 16S rRNA central domain where it helps coordinate assembly of the platform of the 30S subunit. The chain is Small ribosomal subunit protein uS8 from Novosphingobium aromaticivorans (strain ATCC 700278 / DSM 12444 / CCUG 56034 / CIP 105152 / NBRC 16084 / F199).